A 421-amino-acid polypeptide reads, in one-letter code: Glutamyl-tRNA reductase (421 aa).

Residues 49-52 (TCNR), S109, 114-116 (EPQ), and Q120 contribute to the substrate site. C50 functions as the Nucleophile in the catalytic mechanism. Residue 189–194 (GAGKMS) coordinates NADP(+).

Belongs to the glutamyl-tRNA reductase family. In terms of assembly, homodimer.

It catalyses the reaction (S)-4-amino-5-oxopentanoate + tRNA(Glu) + NADP(+) = L-glutamyl-tRNA(Glu) + NADPH + H(+). It functions in the pathway porphyrin-containing compound metabolism; protoporphyrin-IX biosynthesis; 5-aminolevulinate from L-glutamyl-tRNA(Glu): step 1/2. Its function is as follows. Catalyzes the NADPH-dependent reduction of glutamyl-tRNA(Glu) to glutamate 1-semialdehyde (GSA). This is Glutamyl-tRNA reductase from Solibacter usitatus (strain Ellin6076).